The sequence spans 225 residues: Cytidylate kinase (225 aa).

11–19 is an ATP binding site; it reads GPAAAGKST.

The protein belongs to the cytidylate kinase family. Type 1 subfamily.

Its subcellular location is the cytoplasm. It catalyses the reaction CMP + ATP = CDP + ADP. The enzyme catalyses dCMP + ATP = dCDP + ADP. This is Cytidylate kinase from Bacillus anthracis (strain A0248).